Consider the following 164-residue polypeptide: Dehydrin Rab16C (164 aa).

Positions 42-51 are enriched in gly residues; sequence MGGHHAGAGG. Residues 42–164 form a disordered region; that stretch reads MGGHHAGAGG…KIKEKLPGQH (123 aa). The segment covering 105–115 has biased composition (low complexity); the sequence is GNNHQQQQMMG. Residues 128 to 138 are compositionally biased toward gly residues; sequence GMTGAGTGTGV. Basic and acidic residues predominate over residues 147 to 164; it reads GEKKGFMDKIKEKLPGQH.

This sequence belongs to the plant dehydrin family.

The polypeptide is Dehydrin Rab16C (RAB16C) (Oryza sativa subsp. indica (Rice)).